Reading from the N-terminus, the 604-residue chain is Elongation factor 4 (604 aa).

Residues 2–184 (DHIRNFSIIA…AVITRMPAPR (183 aa)) enclose the tr-type G domain. GTP-binding positions include 14–19 (DHGKST) and 131–134 (NKMD).

This sequence belongs to the TRAFAC class translation factor GTPase superfamily. Classic translation factor GTPase family. LepA subfamily.

It localises to the cell inner membrane. The enzyme catalyses GTP + H2O = GDP + phosphate + H(+). Functionally, required for accurate and efficient protein synthesis under certain stress conditions. May act as a fidelity factor of the translation reaction, by catalyzing a one-codon backward translocation of tRNAs on improperly translocated ribosomes. Back-translocation proceeds from a post-translocation (POST) complex to a pre-translocation (PRE) complex, thus giving elongation factor G a second chance to translocate the tRNAs correctly. Binds to ribosomes in a GTP-dependent manner. This is Elongation factor 4 from Methylibium petroleiphilum (strain ATCC BAA-1232 / LMG 22953 / PM1).